We begin with the raw amino-acid sequence, 246 residues long: MSKPKDKERINEKRRAKFKELQKKIGIFFTNEKLLIQAFTHSSYVNEHRRRPHEDNERLEFLGDAVLELTVSQYLFKKFPHMSEGELTKLRAAIVCEPSLVKFANALSFGELVLLGKGEELTGGRTRPALLADVFEAFIGALYLDQGMDAVMQFLGQTIFPKIDEGAFSHVMDFKSQLQELVQRDGIGVLEYSILEEKGPAHNKEFVSRVSLNGQELGIGVGKSKKEAEQHAAQMALQKLKTIGKE.

Positions 18–147 constitute an RNase III domain; the sequence is FKELQKKIGI…FIGALYLDQG (130 aa). Glu-60 contributes to the Mg(2+) binding site. Asp-64 is a catalytic residue. Residues Asp-133 and Glu-136 each coordinate Mg(2+). Glu-136 is an active-site residue. The 70-residue stretch at 173 to 242 folds into the DRBM domain; that stretch reads DFKSQLQELV…AQMALQKLKT (70 aa).

The protein belongs to the ribonuclease III family. As to quaternary structure, homodimer. Requires Mg(2+) as cofactor.

The protein localises to the cytoplasm. It carries out the reaction Endonucleolytic cleavage to 5'-phosphomonoester.. Digests double-stranded RNA. Involved in the processing of primary rRNA transcript to yield the immediate precursors to the large and small rRNAs (23S and 16S). Processes some mRNAs, and tRNAs when they are encoded in the rRNA operon. Processes pre-crRNA and tracrRNA of type II CRISPR loci if present in the organism. The chain is Ribonuclease 3 from Geobacillus sp. (strain WCH70).